A 419-amino-acid polypeptide reads, in one-letter code: NFATC2-interacting protein (419 aa).

Disordered stretches follow at residues 1 to 131 (MAEP…GKVK) and 151 to 215 (DEEE…HTRA). Residues 11-27 (WSGGSGAGRGGRGGWGG) are compositionally biased toward gly residues. Residues 35–51 (QRSPSRGTLDVVSVDLV) are compositionally biased toward low complexity. Phosphoserine is present on residues serine 54, serine 84, serine 88, serine 90, serine 92, and serine 127. Residues lysine 129 and lysine 131 each participate in a glycyl lysine isopeptide (Lys-Gly) (interchain with G-Cter in SUMO2) cross-link. Residues 180-192 (RTKDKEEKKKTEF) show a composition bias toward basic and acidic residues. Phosphoserine occurs at positions 198, 201, 204, 220, and 314. Positions 209-231 (SRTHTRALKKLSEVNKRLQDLRS) form a coiled coil. Threonine 316 and threonine 318 each carry phosphothreonine. The Ubiquitin-like domain maps to 348–419 (LQLRVQGKEK…ESGDLIEVWG (72 aa)). 2 positions are modified to phosphoserine: serine 369 and serine 390.

As to quaternary structure, interacts with NFATC2, TRAF1, TRAF2 and PRMT1. Interacts with UBE2I/UBC9. In terms of processing, methylation at the N-terminus by PRMT1 modulates interaction with the NFAT complex and results in augmented cytokine production.

Its subcellular location is the nucleus. The protein resides in the cytoplasm. Functionally, in T-helper 2 (Th2) cells, regulates the magnitude of NFAT-driven transcription of a specific subset of cytokine genes, including IL3, IL4, IL5 and IL13, but not IL2. Recruits PRMT1 to the IL4 promoter; this leads to enhancement of histone H4 'Arg-3'-methylation and facilitates subsequent histone acetylation at the IL4 locus, thus promotes robust cytokine expression. Down-regulates formation of poly-SUMO chains by UBE2I/UBC9. The protein is NFATC2-interacting protein (NFATC2IP) of Homo sapiens (Human).